The following is a 295-amino-acid chain: DegV domain-containing protein MG326 (295 aa).

Residues 4–292 form the DegV domain; that stretch reads TAIITDSTAS…IDAFSISLLI (289 aa). 2 residues coordinate hexadecanoate: Thr-63 and Ser-95.

Its function is as follows. May bind long-chain fatty acids, such as palmitate, and may play a role in lipid transport or fatty acid metabolism. In Mycoplasma genitalium (strain ATCC 33530 / DSM 19775 / NCTC 10195 / G37) (Mycoplasmoides genitalium), this protein is DegV domain-containing protein MG326.